Consider the following 59-residue polypeptide: Large ribosomal subunit protein uL30 (59 aa).

It belongs to the universal ribosomal protein uL30 family. As to quaternary structure, part of the 50S ribosomal subunit.

In Buchnera aphidicola subsp. Acyrthosiphon pisum (strain 5A), this protein is Large ribosomal subunit protein uL30.